A 254-amino-acid chain; its full sequence is UDP-2,3-diacylglucosamine hydrolase (254 aa).

The Mn(2+) site is built by D8, H10, D41, N79, and H114. Position 79–80 (79–80 (NR)) interacts with substrate. Substrate-binding residues include D122, S160, N164, K167, and H195. Residues H195 and H197 each coordinate Mn(2+).

Belongs to the LpxH family. The cofactor is Mn(2+).

It is found in the cell inner membrane. It catalyses the reaction UDP-2-N,3-O-bis[(3R)-3-hydroxytetradecanoyl]-alpha-D-glucosamine + H2O = 2-N,3-O-bis[(3R)-3-hydroxytetradecanoyl]-alpha-D-glucosaminyl 1-phosphate + UMP + 2 H(+). It participates in glycolipid biosynthesis; lipid IV(A) biosynthesis; lipid IV(A) from (3R)-3-hydroxytetradecanoyl-[acyl-carrier-protein] and UDP-N-acetyl-alpha-D-glucosamine: step 4/6. Its function is as follows. Hydrolyzes the pyrophosphate bond of UDP-2,3-diacylglucosamine to yield 2,3-diacylglucosamine 1-phosphate (lipid X) and UMP by catalyzing the attack of water at the alpha-P atom. Involved in the biosynthesis of lipid A, a phosphorylated glycolipid that anchors the lipopolysaccharide to the outer membrane of the cell. The polypeptide is UDP-2,3-diacylglucosamine hydrolase (Aeromonas salmonicida (strain A449)).